Consider the following 468-residue polypeptide: Interleukin-9 receptor (468 aa).

An N-terminal signal peptide occupies residues 1 to 37; it reads MALGRCIAEGWTLERVAVKQVSWFLIYSWVCSGVCRG. Topologically, residues 38 to 270 are extracellular; the sequence is VSVPEQGGGG…GLLVPRWQWS (233 aa). Residues asparagine 116 and asparagine 155 are each glycosylated (N-linked (GlcNAc...) asparagine). The region spanning 148–256 is the Fibronectin type-III domain; the sequence is PPSDLQSNVS…WSQPVSFPSP (109 aa). The WSXWS motif motif lies at 244–248; that stretch reads WSEWS. A helical membrane pass occupies residues 271–291; it reads ASILVVVPIFLLLTGFVHLLF. Over 292-468 the chain is Cytoplasmic; that stretch reads KLSPRLKRIF…PVALPVSSRA (177 aa). Residues 301–309 carry the Box 1 motif motif; that stretch reads FYQNIPSPE. A disordered region spans residues 407–426; sequence PQEDWAPLGSARPPPPDSDS.

The protein belongs to the type I cytokine receptor family. Type 4 subfamily. As to quaternary structure, interacts with IL9.

The protein localises to the cell membrane. Its subcellular location is the secreted. Functionally, plays an important role in the immune response against parasites by acting as a receptor of IL9. The sequence is that of Interleukin-9 receptor (Il9r) from Mus musculus (Mouse).